The chain runs to 318 residues: NADH-ubiquinone oxidoreductase chain 1 (318 aa).

Transmembrane regions (helical) follow at residues 2 to 22 (PMINLLLLILPTLIAMAFLML), 69 to 89 (ALYIIAPTLALTIALLLWTPL), 100 to 120 (LGLLFILATSSLTVYSILWSG), 147 to 167 (AIILLSVLLMSGSFNLSTLIT), 171 to 191 (HIWLLLPTWPLAMMWFISTLA), 222 to 242 (LFFMAEYVNIIMMNALTTMIF), 253 to 273 (ELYTTCFTIKTLLLTSLFLWI), and 294 to 314 (LPLTLTLLMWYISLSTMIASI).

The protein belongs to the complex I subunit 1 family. In terms of assembly, core subunit of respiratory chain NADH dehydrogenase (Complex I) which is composed of 45 different subunits.

It is found in the mitochondrion inner membrane. The catalysed reaction is a ubiquinone + NADH + 5 H(+)(in) = a ubiquinol + NAD(+) + 4 H(+)(out). In terms of biological role, core subunit of the mitochondrial membrane respiratory chain NADH dehydrogenase (Complex I) which catalyzes electron transfer from NADH through the respiratory chain, using ubiquinone as an electron acceptor. Essential for the catalytic activity and assembly of complex I. The chain is NADH-ubiquinone oxidoreductase chain 1 (MT-ND1) from Hylobates lar (Lar gibbon).